A 325-amino-acid chain; its full sequence is Beta-ketoacyl-[acyl-carrier-protein] synthase III (325 aa).

Catalysis depends on residues Cys-116 and His-252. The segment at 253 to 257 (QANLR) is ACP-binding. The active site involves Asn-282.

It belongs to the thiolase-like superfamily. FabH family. As to quaternary structure, homodimer.

The protein localises to the cytoplasm. The enzyme catalyses malonyl-[ACP] + acetyl-CoA + H(+) = 3-oxobutanoyl-[ACP] + CO2 + CoA. It participates in lipid metabolism; fatty acid biosynthesis. Catalyzes the condensation reaction of fatty acid synthesis by the addition to an acyl acceptor of two carbons from malonyl-ACP. Catalyzes the first condensation reaction which initiates fatty acid synthesis and may therefore play a role in governing the total rate of fatty acid production. Possesses both acetoacetyl-ACP synthase and acetyl transacylase activities. Its substrate specificity determines the biosynthesis of branched-chain and/or straight-chain of fatty acids. This is Beta-ketoacyl-[acyl-carrier-protein] synthase III from Xanthomonas axonopodis pv. citri (strain 306).